The primary structure comprises 286 residues: CLA biosynthesis dehydrogenase/reductase (286 aa).

The NAD(+) site is built by Asp37, Asp63, Val64, Asn90, Tyr156, and Lys160. Tyr156 serves as the catalytic Proton acceptor.

The protein belongs to the short-chain dehydrogenases/reductases (SDR) family.

Its subcellular location is the cytoplasm. It carries out the reaction (10S)-hydroxy-(12Z)-octadecenoate + NAD(+) = 10-oxo-(12Z)-octadecenoate + NADH + H(+). The catalysed reaction is 10-oxo-(11E)-octadecenoate + NADH + H(+) = 10-hydroxy-(11E)-octadecenoate + NAD(+). The enzyme catalyses 10-oxooctadecanoate + NADH + H(+) = 10-hydroxyoctadecanoate + NAD(+). The protein operates within lipid metabolism; fatty acid metabolism. Its function is as follows. Is involved in a saturation metabolic pathway of polyunsaturated fatty acids, that detoxifies unsaturated fatty acids and generates hydroxy fatty acids, oxo fatty acids, conjugated fatty acids such as conjugated linoleic acids (CLAs), and partially saturated trans-fatty acids as intermediates. CLA-DH catalyzes the dehydrogenation/reduction steps in the production of 10-oxo-(12Z)-octadecenoate, 10-hydroxy-(11E)-octadecenoate and 10-hydroxyoctadecanoate during linoleate metabolism. As part of the gut microbiome, this enzyme modifies host fatty acid composition and is expected to improve human health by altering lipid metabolism related to the onset of metabolic syndrome. This Lactiplantibacillus plantarum (Lactobacillus plantarum) protein is CLA biosynthesis dehydrogenase/reductase.